We begin with the raw amino-acid sequence, 115 residues long: U3-lycotoxin-Ls1a (115 aa).

The signal sequence occupies residues 1-20 (MKFVLLFGVFLVTLFSYSSA). Positions 21-44 (EMLDDFDQAAEDELLSLIEKEEAR) are excised as a propeptide. Cystine bridges form between cysteine 48–cysteine 63, cysteine 55–cysteine 72, cysteine 62–cysteine 87, and cysteine 74–cysteine 85.

It belongs to the neurotoxin 19 (CSTX) family. 01 subfamily. Expressed by the venom gland.

Its subcellular location is the secreted. The sequence is that of U3-lycotoxin-Ls1a from Lycosa singoriensis (Wolf spider).